The following is a 942-amino-acid chain: Protein translocase subunit SecA (942 aa).

Residues Gln90, 108 to 112 (GEGKT), and Asp509 contribute to the ATP site.

This sequence belongs to the SecA family. In terms of assembly, monomer and homodimer. Part of the essential Sec protein translocation apparatus which comprises SecA, SecYEG and auxiliary proteins SecDF. Other proteins may also be involved.

Its subcellular location is the cell inner membrane. It is found in the cellular thylakoid membrane. The protein resides in the cytoplasm. The enzyme catalyses ATP + H2O + cellular proteinSide 1 = ADP + phosphate + cellular proteinSide 2.. Part of the Sec protein translocase complex. Interacts with the SecYEG preprotein conducting channel. Has a central role in coupling the hydrolysis of ATP to the transfer of proteins into and across the cell membrane, serving as an ATP-driven molecular motor driving the stepwise translocation of polypeptide chains across the membrane. In terms of biological role, probably participates in protein translocation into and across both the cytoplasmic and thylakoid membranes in cyanobacterial cells. This Prochlorococcus marinus (strain NATL2A) protein is Protein translocase subunit SecA.